The following is a 418-amino-acid chain: Serine--tRNA ligase (418 aa).

231–233 (TAE) lines the L-serine pocket. 262–264 (RSE) contacts ATP. Glu285 is an L-serine binding site. 349–352 (EISS) contacts ATP. Ser385 provides a ligand contact to L-serine.

This sequence belongs to the class-II aminoacyl-tRNA synthetase family. Type-1 seryl-tRNA synthetase subfamily. Homodimer. The tRNA molecule binds across the dimer.

It is found in the cytoplasm. It carries out the reaction tRNA(Ser) + L-serine + ATP = L-seryl-tRNA(Ser) + AMP + diphosphate + H(+). The catalysed reaction is tRNA(Sec) + L-serine + ATP = L-seryl-tRNA(Sec) + AMP + diphosphate + H(+). Its pathway is aminoacyl-tRNA biosynthesis; selenocysteinyl-tRNA(Sec) biosynthesis; L-seryl-tRNA(Sec) from L-serine and tRNA(Sec): step 1/1. In terms of biological role, catalyzes the attachment of serine to tRNA(Ser). Is also able to aminoacylate tRNA(Sec) with serine, to form the misacylated tRNA L-seryl-tRNA(Sec), which will be further converted into selenocysteinyl-tRNA(Sec). The polypeptide is Serine--tRNA ligase (Ureaplasma urealyticum serovar 10 (strain ATCC 33699 / Western)).